A 147-amino-acid polypeptide reads, in one-letter code: Echinoidin (147 aa).

A C-type lectin domain is found at 1–143 (GCCPTFWTSF…STRHYLICKL (143 aa)). Intrachain disulfides connect Cys3–Cys14, Cys31–Cys141, and Cys116–Cys132. Ser38 carries an O-linked (Hex) serine glycan. Residues 39-41 (RGD) carry the Cell attachment site motif.

Homodimer; disulfide-linked. Post-translationally, the identity of the saccharide is not reported in PubMed:3571253, and it is unlikely to be N-acetylgalactosamine. The sugar attached to Ser-38 is represented simply as Hex. In terms of tissue distribution, coelemic fluid.

It is found in the secreted. Its function is as follows. Role in the defense system of the organism against microorganisms. This lectin is specific for Gal-GalNAc. This is Echinoidin from Heliocidaris crassispina (Sea urchin).